Here is a 217-residue protein sequence, read N- to C-terminus: UPF0319 protein HSM_0266 (217 aa).

The signal sequence occupies residues 1 to 21 (MKFSFAALASAMLLTSTAAFA).

This sequence belongs to the UPF0319 family.

This chain is UPF0319 protein HSM_0266, found in Histophilus somni (strain 2336) (Haemophilus somnus).